Consider the following 704-residue polypeptide: Elongation factor G (704 aa).

In terms of domain architecture, tr-type G spans 8-290 (ARYRNIGISA…AVIDYLPSPV (283 aa)). Residues 17–24 (AHIDAGKT), 88–92 (DTPGH), and 142–145 (NKMD) each bind GTP. 2 positions are modified to N6-acetyllysine: K504 and K643.

The protein belongs to the TRAFAC class translation factor GTPase superfamily. Classic translation factor GTPase family. EF-G/EF-2 subfamily.

It is found in the cytoplasm. Functionally, catalyzes the GTP-dependent ribosomal translocation step during translation elongation. During this step, the ribosome changes from the pre-translocational (PRE) to the post-translocational (POST) state as the newly formed A-site-bound peptidyl-tRNA and P-site-bound deacylated tRNA move to the P and E sites, respectively. Catalyzes the coordinated movement of the two tRNA molecules, the mRNA and conformational changes in the ribosome. The sequence is that of Elongation factor G from Shigella flexneri.